The following is a 264-amino-acid chain: 5'-nucleotidase SurE (264 aa).

The a divalent metal cation site is built by D8, D9, S41, and N98.

Belongs to the SurE nucleotidase family. Requires a divalent metal cation as cofactor.

It localises to the cytoplasm. The enzyme catalyses a ribonucleoside 5'-phosphate + H2O = a ribonucleoside + phosphate. Its function is as follows. Nucleotidase that shows phosphatase activity on nucleoside 5'-monophosphates. This is 5'-nucleotidase SurE from Carboxydothermus hydrogenoformans (strain ATCC BAA-161 / DSM 6008 / Z-2901).